The sequence spans 245 residues: Ribonuclease 3 (245 aa).

The RNase III domain maps to 19–148 (FKVFQEKIGI…FIGALYLDQG (130 aa)). E61 provides a ligand contact to Mg(2+). The active site involves D65. Mg(2+) contacts are provided by D134 and E137. E137 is an active-site residue. One can recognise a DRBM domain in the interval 174 to 243 (DYKSQLQELI…AAEALKKLKE (70 aa)).

Belongs to the ribonuclease III family. As to quaternary structure, homodimer. It depends on Mg(2+) as a cofactor.

The protein localises to the cytoplasm. The catalysed reaction is Endonucleolytic cleavage to 5'-phosphomonoester.. Its function is as follows. Digests double-stranded RNA. Involved in the processing of primary rRNA transcript to yield the immediate precursors to the large and small rRNAs (23S and 16S). Processes some mRNAs, and tRNAs when they are encoded in the rRNA operon. Processes pre-crRNA and tracrRNA of type II CRISPR loci if present in the organism. The protein is Ribonuclease 3 of Bacillus cereus (strain ZK / E33L).